The following is a 252-amino-acid chain: Imidazole glycerol phosphate synthase subunit HisF (252 aa).

Active-site residues include D12 and D131.

It belongs to the HisA/HisF family. Heterodimer of HisH and HisF.

The protein resides in the cytoplasm. It catalyses the reaction 5-[(5-phospho-1-deoxy-D-ribulos-1-ylimino)methylamino]-1-(5-phospho-beta-D-ribosyl)imidazole-4-carboxamide + L-glutamine = D-erythro-1-(imidazol-4-yl)glycerol 3-phosphate + 5-amino-1-(5-phospho-beta-D-ribosyl)imidazole-4-carboxamide + L-glutamate + H(+). It functions in the pathway amino-acid biosynthesis; L-histidine biosynthesis; L-histidine from 5-phospho-alpha-D-ribose 1-diphosphate: step 5/9. Its function is as follows. IGPS catalyzes the conversion of PRFAR and glutamine to IGP, AICAR and glutamate. The HisF subunit catalyzes the cyclization activity that produces IGP and AICAR from PRFAR using the ammonia provided by the HisH subunit. The protein is Imidazole glycerol phosphate synthase subunit HisF of Thermus thermophilus (strain ATCC BAA-163 / DSM 7039 / HB27).